The chain runs to 276 residues: Kallikrein-10 (276 aa).

The N-terminal stretch at 1-30 (MRAPHLHLSAASGARALAKLLPLLMAQLWA) is a signal peptide. An N-linked (GlcNAc...) asparagine glycan is attached at asparagine 39. In terms of domain architecture, Peptidase S1 spans 47 to 274 (AYGSPCARGS…YMSWINKVIR (228 aa)). 5 disulfides stabilise this stretch: cysteine 52-cysteine 162, cysteine 71-cysteine 87, cysteine 169-cysteine 235, cysteine 201-cysteine 215, and cysteine 225-cysteine 250. Catalysis depends on charge relay system residues histidine 86 and aspartate 137. The active-site Charge relay system is the serine 229.

It belongs to the peptidase S1 family. Kallikrein subfamily. As to expression, expressed in breast, ovary and prostate.

The protein resides in the secreted. Has a tumor-suppressor role for NES1 in breast and prostate cancer. The polypeptide is Kallikrein-10 (KLK10) (Homo sapiens (Human)).